The sequence spans 364 residues: Metalloendoproteinase 1-MMP (364 aa).

The N-terminal stretch at 1-28 is a signal peptide; that stretch reads MSRNLIYRRNRALCFVLILFCFPYRFGA. Positions 29–149 are cleaved as a propeptide — activation peptide; sequence RNTPEAEQST…NNDFLHTTAH (121 aa). A glycan (N-linked (GlcNAc...) asparagine) is linked at Asn49. The Cysteine switch signature appears at 128 to 135; it reads PRCGVSDT. Cys130 serves as a coordination point for Zn(2+). A Ca(2+)-binding site is contributed by Asp211. 2 residues coordinate Zn(2+): His221 and Asp223. Asp228 and Gly229 together coordinate Ca(2+). His236 is a Zn(2+) binding site. Gly243 provides a ligand contact to Ca(2+). Zn(2+) is bound at residue His246. Ca(2+) contacts are provided by Asp248 and Glu251. A Zn(2+)-binding site is contributed by His275. Glu276 is an active-site residue. Zn(2+)-binding residues include His279 and His285. Residue Asn338 is glycosylated (N-linked (GlcNAc...) asparagine). Gly339 carries GPI-anchor amidated glycine lipidation. The propeptide at 340–364 is removed in mature form; that stretch reads TVSHRFLSGNFIGYVLLVVGLILFL.

The protein belongs to the peptidase M10A family. Matrix metalloproteinases (MMPs) subfamily. The cofactor is Ca(2+). Zn(2+) is required as a cofactor. As to expression, mostly expressed in flowers, roots and stems, and, to a lower extent, in leaves.

It localises to the cell membrane. Inhibited by human TIMP-1 and TIMP-2 and by the peptide hydroxamate inhibitor (BB-94). Repressed by acetohydroxamic acid (AHA). Matrix metalloproteinases (MMPs) or matrixins may play a role in the degradation and remodeling of the extracellular matrix (ECM) during development or in response to stresses. Can cleave myelin basic protein as well as fluorigenic peptide substrates, McaPLANvaDpaAR-NH(2) and McaPChaGNvaHADpa-NH(2) 4-fold more efficiently than McaPLGLDpaAR-NH(2) (QF24). Active on myelin basic protein (MBP) and, to some extent, on McaPLGLDpaAR-NH(2) (QF24) and beta-casein. The chain is Metalloendoproteinase 1-MMP from Arabidopsis thaliana (Mouse-ear cress).